Reading from the N-terminus, the 225-residue chain is NAD(P)H-quinone oxidoreductase subunit K, chloroplastic (225 aa).

Cysteine 43, cysteine 44, cysteine 108, and cysteine 139 together coordinate [4Fe-4S] cluster.

It belongs to the complex I 20 kDa subunit family. In terms of assembly, NDH is composed of at least 16 different subunits, 5 of which are encoded in the nucleus. It depends on [4Fe-4S] cluster as a cofactor.

It is found in the plastid. The protein localises to the chloroplast thylakoid membrane. The enzyme catalyses a plastoquinone + NADH + (n+1) H(+)(in) = a plastoquinol + NAD(+) + n H(+)(out). The catalysed reaction is a plastoquinone + NADPH + (n+1) H(+)(in) = a plastoquinol + NADP(+) + n H(+)(out). In terms of biological role, NDH shuttles electrons from NAD(P)H:plastoquinone, via FMN and iron-sulfur (Fe-S) centers, to quinones in the photosynthetic chain and possibly in a chloroplast respiratory chain. The immediate electron acceptor for the enzyme in this species is believed to be plastoquinone. Couples the redox reaction to proton translocation, and thus conserves the redox energy in a proton gradient. In Lemna minor (Common duckweed), this protein is NAD(P)H-quinone oxidoreductase subunit K, chloroplastic.